The following is a 66-amino-acid chain: Alpha-conotoxin RegIIA (66 aa).

The signal sequence occupies residues 1 to 21 (MGMRMMFTVFLLVVLTTTVVS). Residues 22–49 (STSVRASDGRNAAADNRASDLIAQIVRR) constitute a propeptide that is removed on maturation. Intrachain disulfides connect Cys-51–Cys-57 and Cys-52–Cys-65. Residues 53–55 (SHP) form a ser-Xaa-Pro motif, crucial for potent interaction with nAChR region. The residue at position 65 (Cys-65) is a Cysteine amide.

Belongs to the conotoxin A superfamily. Expressed by the venom duct.

The protein localises to the secreted. Functionally, alpha-conotoxins act on postsynaptic membranes, they bind to the nicotinic acetylcholine receptors (nAChR) and thus inhibit them. This toxin potently inhibits alpha-3 containing subunit nAChR. It inhibits alpha-3-beta-2/CHRNA3-CHRNB2 (IC(50)=10.7-33 nM (rat)/132.4-704.1 nM (human)) and alpha-3-beta-4/CHRNA3-CHRNB4 (IC(50)=47.3-97 nM (rat)/52.1 nM (human)). It also inhibits alpha-7/CHRNA7 nAChR with IC(50)=103-210 nM (human)/41-61.2 nM (rat) nAChRs. It is more potent on alpha-3-beta-2 receptors in human than in rat, due to a variation (Pro vs Gln) in alpha-3 subunit in these orthologs. Conversely, does not show species-specific differences in sensitivity at the alpha-3-beta-4 receptor. This Conus regius (Crown cone) protein is Alpha-conotoxin RegIIA.